The primary structure comprises 360 residues: Threonine synthase (360 aa).

Lys69 carries the N6-(pyridoxal phosphate)lysine modification. Pyridoxal 5'-phosphate is bound by residues Asn95, 196–200 (GNAGN), and Thr326.

This sequence belongs to the threonine synthase family. As to quaternary structure, homodimer. It depends on pyridoxal 5'-phosphate as a cofactor.

The enzyme catalyses O-phospho-L-homoserine + H2O = L-threonine + phosphate. The protein operates within amino-acid biosynthesis; L-threonine biosynthesis; L-threonine from L-aspartate: step 5/5. Its function is as follows. Catalyzes the gamma-elimination of phosphate from L-phosphohomoserine and the beta-addition of water to produce L-threonine. The protein is Threonine synthase (thrC) of Mycobacterium leprae (strain TN).